The primary structure comprises 86 residues: Probable protein BRICK1 (86 aa).

The stretch at 47-81 forms a coiled coil; it reads EATTKSKLASLNEKLDILERKLEVLEVQVSSATTN.

It belongs to the BRK1 family. Binds SCAR.

It localises to the cytoplasm. It is found in the cytoskeleton. In terms of biological role, involved in regulation of actin and microtubule organization. Part of a WAVE complex that activates the Arp2/3 complex. The polypeptide is Probable protein BRICK1 (Oryza sativa subsp. japonica (Rice)).